The primary structure comprises 137 residues: Small ribosomal subunit protein uS12 (137 aa).

The segment at 1-24 (MPTINQLVRKGRRSQSSKSKAPAL) is disordered. Position 102 is a 3-methylthioaspartic acid (D102).

It belongs to the universal ribosomal protein uS12 family. Part of the 30S ribosomal subunit. Contacts proteins S8 and S17. May interact with IF1 in the 30S initiation complex.

Functionally, with S4 and S5 plays an important role in translational accuracy. Interacts with and stabilizes bases of the 16S rRNA that are involved in tRNA selection in the A site and with the mRNA backbone. Located at the interface of the 30S and 50S subunits, it traverses the body of the 30S subunit contacting proteins on the other side and probably holding the rRNA structure together. The combined cluster of proteins S8, S12 and S17 appears to hold together the shoulder and platform of the 30S subunit. The polypeptide is Small ribosomal subunit protein uS12 (Pediococcus pentosaceus (strain ATCC 25745 / CCUG 21536 / LMG 10740 / 183-1w)).